An 89-amino-acid polypeptide reads, in one-letter code: Small ribosomal subunit protein uS15 (89 aa).

This sequence belongs to the universal ribosomal protein uS15 family. Part of the 30S ribosomal subunit. Forms a bridge to the 50S subunit in the 70S ribosome, contacting the 23S rRNA.

In terms of biological role, one of the primary rRNA binding proteins, it binds directly to 16S rRNA where it helps nucleate assembly of the platform of the 30S subunit by binding and bridging several RNA helices of the 16S rRNA. Its function is as follows. Forms an intersubunit bridge (bridge B4) with the 23S rRNA of the 50S subunit in the ribosome. This is Small ribosomal subunit protein uS15 from Syntrophomonas wolfei subsp. wolfei (strain DSM 2245B / Goettingen).